The sequence spans 359 residues: Type-1 angiotensin II receptor B (359 aa).

Residues 1-25 are Extracellular-facing; the sequence is MILNSSIEDGIKRIQDDCPKAGRHN. Asparagine 4 carries N-linked (GlcNAc...) asparagine glycosylation. Residues glutamine 15 and aspartate 17 each coordinate angiotensin II. Disulfide bonds link cysteine 18-cysteine 274 and cysteine 101-cysteine 180. A helical transmembrane segment spans residues 26–55; that stretch reads YIFVMIPTLYSIIFVVGIFGNSLVVIVIYF. Over 56-61 the chain is Cytoplasmic; that stretch reads YMKLKT. A helical membrane pass occupies residues 62-89; sequence VASVFLLNLALADLCFLLTLPLWAVYTA. Over 90–98 the chain is Extracellular; the sequence is MEYQWPFGN. The chain crosses the membrane as a helical span at residues 99-125; sequence HLCKIASASVSFNLYASVFLLTCLSID. Topologically, residues 126-141 are cytoplasmic; sequence RYLAIVHPMKSRLRRT. Residues 142–165 form a helical membrane-spanning segment; it reads MLVAKVTCIIIWLMAGLASLPAVI. Over 166-190 the chain is Extracellular; sequence HRNVYFIENTNITVCAFHYESQNST. Arginine 167 contacts angiotensin II. Asparagine 176 carries N-linked (GlcNAc...) asparagine glycosylation. Residues phenylalanine 182, histidine 183, and tyrosine 184 each contribute to the angiotensin II site. Asparagine 188 carries an N-linked (GlcNAc...) asparagine glycan. Residues 191 to 216 form a helical membrane-spanning segment; it reads LPIGLGLTKNILGFVFPFVIILTSYT. Lysine 199 provides a ligand contact to angiotensin II. At 217 to 239 the chain is on the cytoplasmic side; sequence LIWKALKKAYKIQKNTPRNDDIF. Residues 240-268 form a helical membrane-spanning segment; that stretch reads RIIMAIVLFFFFSWVPHQIFSFLDVLIQL. Topologically, residues 269-278 are extracellular; the sequence is GVIHDCEIAD. Residues 279-304 traverse the membrane as a helical segment; sequence VVDTAMPITICIAYFNNCLNPLFYGF. Residues 305 to 359 lie on the Cytoplasmic side of the membrane; it reads LGKKFKRYFLQLLKYIPPKARSHAGLSTKMSTLSYRPSDNMSSSARKSAYCFEVE. A lipid anchor (S-palmitoyl cysteine) is attached at cysteine 355.

The protein belongs to the G-protein coupled receptor 1 family. As to quaternary structure, interacts with MAS1. Interacts with ARRB1. Interacts with FLNA (via filamin repeat 21); increases PKA-mediated phosphorylation of FLNA. In terms of processing, C-terminal Ser or Thr residues may be phosphorylated.

The protein localises to the cell membrane. Functionally, receptor for angiotensin II, a vasoconstricting peptide, which acts as a key regulator of blood pressure and sodium retention by the kidney. The activated receptor in turn couples to G-alpha proteins G(q) (GNAQ, GNA11, GNA14 or GNA15) and thus activates phospholipase C and increases the cytosolic Ca(2+) concentrations, which in turn triggers cellular responses such as stimulation of protein kinase C. The polypeptide is Type-1 angiotensin II receptor B (Agtr1b) (Mus musculus (Mouse)).